We begin with the raw amino-acid sequence, 79 residues long: Small ribosomal subunit protein bS20 (79 aa).

It belongs to the bacterial ribosomal protein bS20 family.

Functionally, binds directly to 16S ribosomal RNA. The chain is Small ribosomal subunit protein bS20 from Karelsulcia muelleri (strain GWSS) (Sulcia muelleri).